The following is a 216-amino-acid chain: Holliday junction branch migration complex subunit RuvA (216 aa).

Residues 1-64 (MISFIKGVLI…EDAQQLYGFK (64 aa)) form a domain I region. The interval 65–143 (SKVDKKVFQE…KMANEIYAQT (79 aa)) is domain II. A flexible linker region spans residues 144–163 (SGTTTTSQDSQAQQAPTSVV). The domain III stretch occupies residues 164–216 (LANSIFNESVDALLALGYKQKDAEKMARSAMGDATTAAEVIRKALQGSIKSKR).

The protein belongs to the RuvA family. As to quaternary structure, homotetramer. Forms an RuvA(8)-RuvB(12)-Holliday junction (HJ) complex. HJ DNA is sandwiched between 2 RuvA tetramers; dsDNA enters through RuvA and exits via RuvB. An RuvB hexamer assembles on each DNA strand where it exits the tetramer. Each RuvB hexamer is contacted by two RuvA subunits (via domain III) on 2 adjacent RuvB subunits; this complex drives branch migration. In the full resolvosome a probable DNA-RuvA(4)-RuvB(12)-RuvC(2) complex forms which resolves the HJ.

It localises to the cytoplasm. The RuvA-RuvB-RuvC complex processes Holliday junction (HJ) DNA during genetic recombination and DNA repair, while the RuvA-RuvB complex plays an important role in the rescue of blocked DNA replication forks via replication fork reversal (RFR). RuvA specifically binds to HJ cruciform DNA, conferring on it an open structure. The RuvB hexamer acts as an ATP-dependent pump, pulling dsDNA into and through the RuvAB complex. HJ branch migration allows RuvC to scan DNA until it finds its consensus sequence, where it cleaves and resolves the cruciform DNA. The protein is Holliday junction branch migration complex subunit RuvA of Francisella tularensis subsp. tularensis (strain WY96-3418).